Consider the following 478-residue polypeptide: UDP-N-acetylmuramate--L-alanine ligase (478 aa).

ATP is bound at residue 120–126 (GSHGKTT).

It belongs to the MurCDEF family.

Its subcellular location is the cytoplasm. It carries out the reaction UDP-N-acetyl-alpha-D-muramate + L-alanine + ATP = UDP-N-acetyl-alpha-D-muramoyl-L-alanine + ADP + phosphate + H(+). It functions in the pathway cell wall biogenesis; peptidoglycan biosynthesis. Its function is as follows. Cell wall formation. The chain is UDP-N-acetylmuramate--L-alanine ligase from Rickettsia felis (strain ATCC VR-1525 / URRWXCal2) (Rickettsia azadi).